The chain runs to 852 residues: Zinc finger protein 484 (852 aa).

Positions 8–78 constitute a KRAB domain; sequence VSFKDVTVDF…DGEIPSQSRP (71 aa). A Glycyl lysine isopeptide (Lys-Gly) (interchain with G-Cter in SUMO2) cross-link involves residue Lys156. A C2H2-type 1; degenerate zinc finger spans residues 223–245; sequence CECNQCGKPLHHKQALIQQQKIH. The segment at 279-301 adopts a C2H2-type 2; degenerate zinc-finger fold; the sequence is HECHECEAVFTQKSQLDGSQRVY. A C2H2-type 3; degenerate zinc finger spans residues 328–350; it reads YKCSDYGRAFIQKSDLFRCQRIH. The segment at 356–378 adopts a C2H2-type 4; degenerate zinc-finger fold; that stretch reads YEYSECEKNLPQNSNLNIHKKIH. 15 consecutive C2H2-type zinc fingers follow at residues 384 to 406, 412 to 434, 440 to 462, 468 to 490, 496 to 518, 524 to 546, 552 to 574, 580 to 602, 608 to 630, 636 to 658, 664 to 686, 692 to 714, 720 to 742, 748 to 770, and 776 to 798; these read FECTECGKAFTRKSTLSMHQKIH, YVCTECGKAFIRKSHFITHERIH, YECSDCGKSFIKKSQLHVHQRIH, FICSECGKVFTHKTNLIIHQKIH, YICTVCGKAFTDRSNLIKHQKIH, YKCSDCGKSFTWKSRLRIHQKCH, YECSECGKAFIQKSTLSMHQRIH, YVCTECGKAFFHKSHFITHERIH, YECSICGKSFTKKSQLHVHQQIH, YRCAECGKAFTDRSNLFTHQKIH, YKCSDCGKAFTRKSGLHIHQQSH, YECSECGKAFARKSTLIMHQRIH, YICNECGKSFIQKSHLNRHRRIH, YECSDCGKSFIKKSQLHEHHRIH, and YICAECGKAFTIRSNLIKHQKIH. A Glycyl lysine isopeptide (Lys-Gly) (interchain with G-Cter in SUMO2) cross-link involves residue Lys816.

It belongs to the krueppel C2H2-type zinc-finger protein family.

It is found in the nucleus. In terms of biological role, may be involved in transcriptional regulation. The polypeptide is Zinc finger protein 484 (ZNF484) (Homo sapiens (Human)).